A 313-amino-acid chain; its full sequence is Pantoate--beta-alanine ligase (313 aa).

Residue 36 to 43 (MGYLHQGH) coordinates ATP. Catalysis depends on His-43, which acts as the Proton donor. Gln-71 is a binding site for (R)-pantoate. Residue Gln-71 participates in beta-alanine binding. 178–181 (GKKD) serves as a coordination point for ATP. Gln-184 contacts (R)-pantoate. 215-218 (MSSR) lines the ATP pocket.

The protein belongs to the pantothenate synthetase family. Homodimer.

It localises to the cytoplasm. The protein resides in the cytosol. The enzyme catalyses (R)-pantoate + beta-alanine + ATP = (R)-pantothenate + AMP + diphosphate + H(+). Its pathway is cofactor biosynthesis; (R)-pantothenate biosynthesis; (R)-pantothenate from (R)-pantoate and beta-alanine: step 1/1. Functionally, catalyzes the condensation of pantoate with beta-alanine to form pantothenate. Essential for panthotenate biosynthesis. In Oryza sativa subsp. japonica (Rice), this protein is Pantoate--beta-alanine ligase (PANC).